The primary structure comprises 635 residues: Threonine--tRNA ligase (635 aa).

The 61-residue stretch at 1–61 folds into the TGS domain; sequence MIKITLKDGK…HKDSSLEILT (61 aa). Residues 242–532 form a catalytic region; it reads DHRKLGKELD…LIEQYAGAFP (291 aa). Residues C333, H384, and H509 each contribute to the Zn(2+) site.

It belongs to the class-II aminoacyl-tRNA synthetase family. In terms of assembly, homodimer. Zn(2+) is required as a cofactor.

Its subcellular location is the cytoplasm. It carries out the reaction tRNA(Thr) + L-threonine + ATP = L-threonyl-tRNA(Thr) + AMP + diphosphate + H(+). Functionally, catalyzes the attachment of threonine to tRNA(Thr) in a two-step reaction: L-threonine is first activated by ATP to form Thr-AMP and then transferred to the acceptor end of tRNA(Thr). Also edits incorrectly charged L-seryl-tRNA(Thr). The sequence is that of Threonine--tRNA ligase from Clostridium botulinum (strain 657 / Type Ba4).